Consider the following 762-residue polypeptide: Endonuclease MutS2 (762 aa).

Residues methionine 1–proline 22 form a disordered region. Positions leucine 9–threonine 20 are enriched in low complexity. ATP is bound at residue glycine 333–threonine 340. Residues leucine 688–leucine 762 form the Smr domain.

This sequence belongs to the DNA mismatch repair MutS family. MutS2 subfamily. As to quaternary structure, homodimer. Binds to stalled ribosomes, contacting rRNA.

Its activity is regulated as follows. ATPase activity is stimulated by DNA. Its function is as follows. Endonuclease that is involved in the suppression of homologous recombination and may thus have a key role in the control of bacterial genetic diversity. Also involved in repairing oxidative DNA damage. Has ATPase activity. Binds DNA. In terms of biological role, endonuclease that is involved in the suppression of homologous recombination and thus may have a key role in the control of bacterial genetic diversity. Acts as a ribosome collision sensor, splitting the ribosome into its 2 subunits. Detects stalled/collided 70S ribosomes which it binds and splits by an ATP-hydrolysis driven conformational change. Acts upstream of the ribosome quality control system (RQC), a ribosome-associated complex that mediates the extraction of incompletely synthesized nascent chains from stalled ribosomes and their subsequent degradation. Probably generates substrates for RQC. In Helicobacter pylori (strain ATCC 700392 / 26695) (Campylobacter pylori), this protein is Endonuclease MutS2.